Reading from the N-terminus, the 46-residue chain is Mu-segestritoxin-Sf1b (46 aa).

4 disulfides stabilise this stretch: Cys3/Cys19, Cys10/Cys22, Cys18/Cys42, and Cys24/Cys40. Residues 31–33 form a keys region for toxin activity region; sequence RPW.

It belongs to the neurotoxin 16 (SFI) family. As to expression, expressed by the venom gland.

Its subcellular location is the secreted. Insecticidal toxin. Causes flaccid paralysis followed by death when injected into Heliothis virescens larvae. Does not induce any toxic effects when injected intravenously into adult mice at a dose of 1.25 mg/kg body weight. The polypeptide is Mu-segestritoxin-Sf1b (Segestria florentina (Tube-web spider)).